The chain runs to 232 residues: Large ribosomal subunit protein uL1 (232 aa).

The protein belongs to the universal ribosomal protein uL1 family. As to quaternary structure, part of the 50S ribosomal subunit.

Its function is as follows. Binds directly to 23S rRNA. The L1 stalk is quite mobile in the ribosome, and is involved in E site tRNA release. Protein L1 is also a translational repressor protein, it controls the translation of the L11 operon by binding to its mRNA. This is Large ribosomal subunit protein uL1 from Aliarcobacter butzleri (strain RM4018) (Arcobacter butzleri).